The following is a 225-amino-acid chain: Orotate phosphoribosyltransferase (225 aa).

5-phospho-alpha-D-ribose 1-diphosphate is bound by residues Arg-107, Lys-108, Lys-111, and 133–141 (EDLTTDGGS). An orotate-binding site is contributed by Thr-137.

It belongs to the purine/pyrimidine phosphoribosyltransferase family. PyrE subfamily. In terms of assembly, homodimer. It depends on Mg(2+) as a cofactor.

The catalysed reaction is orotidine 5'-phosphate + diphosphate = orotate + 5-phospho-alpha-D-ribose 1-diphosphate. The protein operates within pyrimidine metabolism; UMP biosynthesis via de novo pathway; UMP from orotate: step 1/2. Its function is as follows. Catalyzes the transfer of a ribosyl phosphate group from 5-phosphoribose 1-diphosphate to orotate, leading to the formation of orotidine monophosphate (OMP). This is Orotate phosphoribosyltransferase from Roseobacter denitrificans (strain ATCC 33942 / OCh 114) (Erythrobacter sp. (strain OCh 114)).